Reading from the N-terminus, the 542-residue chain is CTP synthase (542 aa).

The tract at residues 1-265 (MTRYVFITGG…DREILAHFQM (265 aa)) is amidoligase domain. Ser13 serves as a coordination point for CTP. Ser13 serves as a coordination point for UTP. ATP is bound by residues 14 to 19 (SLGKGL) and Asp71. Mg(2+)-binding residues include Asp71 and Glu139. Residues 146 to 148 (DIE), 186 to 191 (KTKPTQ), and Lys222 each bind CTP. UTP contacts are provided by residues 186–191 (KTKPTQ) and Lys222. 238–240 (RDV) is an ATP binding site. In terms of domain architecture, Glutamine amidotransferase type-1 spans 291–541 (TIAIVGKYTG…IAAAIDQSRL (251 aa)). Gly353 serves as a coordination point for L-glutamine. Cys380 (nucleophile; for glutamine hydrolysis) is an active-site residue. L-glutamine is bound by residues 381 to 384 (FGMQ), Glu404, and Arg469. Residues His514 and Glu516 contribute to the active site.

It belongs to the CTP synthase family. Homotetramer.

It carries out the reaction UTP + L-glutamine + ATP + H2O = CTP + L-glutamate + ADP + phosphate + 2 H(+). The catalysed reaction is L-glutamine + H2O = L-glutamate + NH4(+). The enzyme catalyses UTP + NH4(+) + ATP = CTP + ADP + phosphate + 2 H(+). The protein operates within pyrimidine metabolism; CTP biosynthesis via de novo pathway; CTP from UDP: step 2/2. With respect to regulation, allosterically activated by GTP, when glutamine is the substrate; GTP has no effect on the reaction when ammonia is the substrate. The allosteric effector GTP functions by stabilizing the protein conformation that binds the tetrahedral intermediate(s) formed during glutamine hydrolysis. Inhibited by the product CTP, via allosteric rather than competitive inhibition. Catalyzes the ATP-dependent amination of UTP to CTP with either L-glutamine or ammonia as the source of nitrogen. Regulates intracellular CTP levels through interactions with the four ribonucleotide triphosphates. This is CTP synthase from Methylorubrum extorquens (strain CM4 / NCIMB 13688) (Methylobacterium extorquens).